Here is a 199-residue protein sequence, read N- to C-terminus: NADH-quinone oxidoreductase subunit C (199 aa).

It belongs to the complex I 30 kDa subunit family. NDH-1 is composed of 14 different subunits. Subunits NuoB, C, D, E, F, and G constitute the peripheral sector of the complex.

Its subcellular location is the cell inner membrane. The catalysed reaction is a quinone + NADH + 5 H(+)(in) = a quinol + NAD(+) + 4 H(+)(out). Functionally, NDH-1 shuttles electrons from NADH, via FMN and iron-sulfur (Fe-S) centers, to quinones in the respiratory chain. The immediate electron acceptor for the enzyme in this species is believed to be ubiquinone. Couples the redox reaction to proton translocation (for every two electrons transferred, four hydrogen ions are translocated across the cytoplasmic membrane), and thus conserves the redox energy in a proton gradient. The sequence is that of NADH-quinone oxidoreductase subunit C from Roseobacter denitrificans (strain ATCC 33942 / OCh 114) (Erythrobacter sp. (strain OCh 114)).